Consider the following 177-residue polypeptide: Peptidyl-tRNA hydrolase 1 (177 aa).

Residue tyrosine 18 coordinates tRNA. Histidine 23 acts as the Proton acceptor in catalysis. TRNA-binding residues include phenylalanine 65, asparagine 67, and asparagine 113.

Belongs to the PTH family. As to quaternary structure, monomer.

The protein resides in the cytoplasm. The enzyme catalyses an N-acyl-L-alpha-aminoacyl-tRNA + H2O = an N-acyl-L-amino acid + a tRNA + H(+). Hydrolyzes ribosome-free peptidyl-tRNAs (with 1 or more amino acids incorporated), which drop off the ribosome during protein synthesis, or as a result of ribosome stalling. In terms of biological role, catalyzes the release of premature peptidyl moieties from peptidyl-tRNA molecules trapped in stalled 50S ribosomal subunits, and thus maintains levels of free tRNAs and 50S ribosomes. The sequence is that of Peptidyl-tRNA hydrolase 1 from Corynebacterium glutamicum (strain ATCC 13032 / DSM 20300 / JCM 1318 / BCRC 11384 / CCUG 27702 / LMG 3730 / NBRC 12168 / NCIMB 10025 / NRRL B-2784 / 534).